Consider the following 199-residue polypeptide: Pyridoxine/pyridoxamine 5'-phosphate oxidase (199 aa).

FMN-binding positions include 44–49 (RTVLLK), 59–60 (YT), Lys66, and Gln91. Lys49 contributes to the substrate binding site. Residues Tyr109, Arg113, and Ser117 each contribute to the substrate site. Residues 126–127 (QS) and Trp171 contribute to the FMN site. Substrate is bound at residue 177-179 (RLH). Position 181 (Arg181) interacts with FMN.

It belongs to the pyridoxamine 5'-phosphate oxidase family. Homodimer. It depends on FMN as a cofactor.

The enzyme catalyses pyridoxamine 5'-phosphate + O2 + H2O = pyridoxal 5'-phosphate + H2O2 + NH4(+). It catalyses the reaction pyridoxine 5'-phosphate + O2 = pyridoxal 5'-phosphate + H2O2. It functions in the pathway cofactor metabolism; pyridoxal 5'-phosphate salvage; pyridoxal 5'-phosphate from pyridoxamine 5'-phosphate: step 1/1. Its pathway is cofactor metabolism; pyridoxal 5'-phosphate salvage; pyridoxal 5'-phosphate from pyridoxine 5'-phosphate: step 1/1. In terms of biological role, catalyzes the oxidation of either pyridoxine 5'-phosphate (PNP) or pyridoxamine 5'-phosphate (PMP) into pyridoxal 5'-phosphate (PLP). This is Pyridoxine/pyridoxamine 5'-phosphate oxidase from Xanthomonas euvesicatoria pv. vesicatoria (strain 85-10) (Xanthomonas campestris pv. vesicatoria).